We begin with the raw amino-acid sequence, 243 residues long: Venom nerve growth factor 2 (243 aa).

Residues 1-18 (MSMLCYTLIIAFLIGIWA) form the signal peptide. The propeptide occupies 19 to 125 (APKSEDNVPL…TLNRNIRAKR (107 aa)). Positions 47–66 (GLKTSRNTDQRHPAPKKAED) are enriched in basic and acidic residues. A disordered region spans residues 47–67 (GLKTSRNTDQRHPAPKKAEDQ). Disulfide bonds link C139–C204 and C192–C234. N-linked (GlcNAc...) asparagine glycosylation occurs at N148.

The protein belongs to the NGF-beta family. In terms of assembly, homodimer; non-covalently linked. Expressed by the venom gland.

It is found in the secreted. In terms of biological role, nerve growth factor is important for the development and maintenance of the sympathetic and sensory nervous systems. It stimulates division and differentiation of sympathetic and embryonic sensory neurons as well as basal forebrain cholinergic neurons in the brain. Its relevance in the snake venom is not clear. However, it has been shown to inhibit metalloproteinase-dependent proteolysis of platelet glycoprotein Ib alpha, suggesting a metalloproteinase inhibition to prevent metalloprotease autodigestion and/or protection against prey proteases. Binds a lipid between the two protein chains in the homodimer. The lipid-bound form promotes histamine relase from mouse mast cells, contrary to the lipid-free form. This Pseudonaja textilis (Eastern brown snake) protein is Venom nerve growth factor 2.